The sequence spans 273 residues: Ribosomal RNA small subunit methyltransferase A (273 aa).

Residues Asn-18, Leu-20, Gly-45, Glu-66, Asp-91, and Asn-113 each contribute to the S-adenosyl-L-methionine site.

The protein belongs to the class I-like SAM-binding methyltransferase superfamily. rRNA adenine N(6)-methyltransferase family. RsmA subfamily.

The protein resides in the cytoplasm. It catalyses the reaction adenosine(1518)/adenosine(1519) in 16S rRNA + 4 S-adenosyl-L-methionine = N(6)-dimethyladenosine(1518)/N(6)-dimethyladenosine(1519) in 16S rRNA + 4 S-adenosyl-L-homocysteine + 4 H(+). Functionally, specifically dimethylates two adjacent adenosines (A1518 and A1519) in the loop of a conserved hairpin near the 3'-end of 16S rRNA in the 30S particle. May play a critical role in biogenesis of 30S subunits. In Salmonella schwarzengrund (strain CVM19633), this protein is Ribosomal RNA small subunit methyltransferase A.